Consider the following 600-residue polypeptide: tRNA(Ile)-lysidine synthase, chloroplastic (600 aa).

35–40 (SGGQDS) serves as a coordination point for ATP.

The protein belongs to the tRNA(Ile)-lysidine synthase family.

Its subcellular location is the plastid. It is found in the chloroplast. The enzyme catalyses cytidine(34) in tRNA(Ile2) + L-lysine + ATP = lysidine(34) in tRNA(Ile2) + AMP + diphosphate + H(+). Ligates lysine onto the cytidine present at position 34 of the AUA codon-specific tRNA(Ile) that contains the anticodon CAU, in an ATP-dependent manner. Cytidine is converted to lysidine, thus changing the amino acid specificity of the tRNA from methionine to isoleucine. This is tRNA(Ile)-lysidine synthase, chloroplastic from Tupiella akineta (Green alga).